We begin with the raw amino-acid sequence, 138 residues long: uncharacterized protein (138 aa).

The helical transmembrane segment at 19 to 40 (ECKVSVISFFLLAFLLMAHIWL) threads the bilayer. 3 repeat units span residues 94 to 106 (KGEI…KKEG), 107 to 119 (KGEI…KKEG), and 120 to 132 (KGEI…KKEV). Residues 94–132 (KGEIEGKEEKKEGKGEIEGKEEKKEGKGEIEGKEEKKEV) form a 3 X 13 AA tandem repeats of K-G-E-I-E-G-K-E-E-K-K-E-[GV] region. Residues 98-138 (EGKEEKKEGKGEIEGKEEKKEGKGEIEGKEEKKEVENGPRK) form a disordered region.

In terms of tissue distribution, expressed in roots, leaves and flowers.

It is found in the mitochondrion membrane. Involved in cytoplasmic male sterility (CMS) by leading to pollen abortion. Not expressed in fertile (normal) plants. This is an uncharacterized protein from Raphanus sativus (Radish).